A 254-amino-acid polypeptide reads, in one-letter code: Alcohol dehydrogenase (254 aa).

Residue isoleucine 9 to asparagine 32 participates in NAD(+) binding. Position 138 (serine 138) interacts with substrate. The active-site Proton acceptor is the tyrosine 151.

It belongs to the short-chain dehydrogenases/reductases (SDR) family. Homodimer.

It catalyses the reaction a primary alcohol + NAD(+) = an aldehyde + NADH + H(+). It carries out the reaction a secondary alcohol + NAD(+) = a ketone + NADH + H(+). In Drosophila paulistorum (Fruit fly), this protein is Alcohol dehydrogenase (Adh).